The chain runs to 706 residues: Elongation factor G (706 aa).

A tr-type G domain is found at 15–291; sequence LKTRNIGISA…GVLDYLASPV (277 aa). GTP is bound by residues 24 to 31, 91 to 95, and 145 to 148; these read AHIDSGKT, DTPGH, and NKLD.

This sequence belongs to the TRAFAC class translation factor GTPase superfamily. Classic translation factor GTPase family. EF-G/EF-2 subfamily.

The protein resides in the cytoplasm. Functionally, catalyzes the GTP-dependent ribosomal translocation step during translation elongation. During this step, the ribosome changes from the pre-translocational (PRE) to the post-translocational (POST) state as the newly formed A-site-bound peptidyl-tRNA and P-site-bound deacylated tRNA move to the P and E sites, respectively. Catalyzes the coordinated movement of the two tRNA molecules, the mRNA and conformational changes in the ribosome. In Leptospira interrogans serogroup Icterohaemorrhagiae serovar copenhageni (strain Fiocruz L1-130), this protein is Elongation factor G.